The primary structure comprises 193 residues: Xanthine phosphoribosyltransferase (193 aa).

The xanthine site is built by leucine 20 and threonine 27. Residue 128-132 (ANGQA) participates in 5-phospho-alpha-D-ribose 1-diphosphate binding. Position 156 (lysine 156) interacts with xanthine.

This sequence belongs to the purine/pyrimidine phosphoribosyltransferase family. Xpt subfamily. Homodimer.

The protein resides in the cytoplasm. The catalysed reaction is XMP + diphosphate = xanthine + 5-phospho-alpha-D-ribose 1-diphosphate. It participates in purine metabolism; XMP biosynthesis via salvage pathway; XMP from xanthine: step 1/1. In terms of biological role, converts the preformed base xanthine, a product of nucleic acid breakdown, to xanthosine 5'-monophosphate (XMP), so it can be reused for RNA or DNA synthesis. The protein is Xanthine phosphoribosyltransferase of Streptococcus agalactiae serotype Ia (strain ATCC 27591 / A909 / CDC SS700).